The sequence spans 288 residues: MDSINPQSEFNSEEFVGRFNVIGRDRINCEYLSQLLYSAIIQNLKIKLDDKEYLIFNEYQENVFQLIDSLREFDENIIFIVLEYLASKEYHYLIDCIIMWWCLPNKNMFMSKNMYNKSYKQNIEKFNSKLTNRITHSLIESFCRDALSKTNKIPIHCLDLLWYYMNGMAIDLDFYNSNNCVNVTIIVPEDEESADNSDSTSYVTFGINMEFVLEMGIGKISYSTDPGKKKSFGNYLWQFITSEDTIDAIKFSKSFSNYKSQVLSINKNTVKYFGLDLKIPESVISRLM.

This is an uncharacterized protein from Acanthamoeba polyphaga mimivirus (APMV).